We begin with the raw amino-acid sequence, 118 residues long: Large ribosomal subunit protein bL20 (118 aa).

This sequence belongs to the bacterial ribosomal protein bL20 family.

Its function is as follows. Binds directly to 23S ribosomal RNA and is necessary for the in vitro assembly process of the 50S ribosomal subunit. It is not involved in the protein synthesizing functions of that subunit. This Campylobacter concisus (strain 13826) protein is Large ribosomal subunit protein bL20.